A 124-amino-acid polypeptide reads, in one-letter code: Ribonuclease pancreatic (124 aa).

Basic and acidic residues predominate over residues 1-13 (KETAAEKFQRQHM). Residues 1 to 21 (KETAAEKFQRQHMDTSSSLSN) form a disordered region. Residues lysine 7 and arginine 10 each coordinate substrate. The Proton acceptor role is filled by histidine 12. 4 disulfide bridges follow: cysteine 26-cysteine 84, cysteine 40-cysteine 95, cysteine 58-cysteine 110, and cysteine 65-cysteine 72. A glycan (N-linked (GlcNAc...) asparagine) is linked at asparagine 34. Residues 41–45 (KPVNT), lysine 66, and arginine 85 contribute to the substrate site. The active-site Proton donor is the histidine 119.

It belongs to the pancreatic ribonuclease family. Monomer. Interacts with and forms tight 1:1 complexes with RNH1. Dimerization of two such complexes may occur. Interaction with RNH1 inhibits this protein. As to expression, pancreas.

The protein resides in the secreted. The catalysed reaction is an [RNA] containing cytidine + H2O = an [RNA]-3'-cytidine-3'-phosphate + a 5'-hydroxy-ribonucleotide-3'-[RNA].. It catalyses the reaction an [RNA] containing uridine + H2O = an [RNA]-3'-uridine-3'-phosphate + a 5'-hydroxy-ribonucleotide-3'-[RNA].. Its function is as follows. Endonuclease that catalyzes the cleavage of RNA on the 3' side of pyrimidine nucleotides. Acts on single-stranded and double-stranded RNA. This chain is Ribonuclease pancreatic (RNASE1), found in Hippopotamus amphibius (Hippopotamus).